The chain runs to 361 residues: Queuine tRNA-ribosyltransferase (361 aa).

Catalysis depends on aspartate 92, which acts as the Proton acceptor. Substrate-binding positions include 92-96 (DSGGF), aspartate 146, glutamine 189, and glycine 216. An RNA binding region spans residues 247-253 (GVGKPVD). Residue aspartate 266 is the Nucleophile of the active site. Residues 271–275 (TRSGR) form an RNA binding; important for wobble base 34 recognition region. The Zn(2+) site is built by cysteine 304, cysteine 306, cysteine 309, and histidine 335.

This sequence belongs to the queuine tRNA-ribosyltransferase family. Homodimer. Within each dimer, one monomer is responsible for RNA recognition and catalysis, while the other monomer binds to the replacement base PreQ1. The cofactor is Zn(2+).

It carries out the reaction 7-aminomethyl-7-carbaguanine + guanosine(34) in tRNA = 7-aminomethyl-7-carbaguanosine(34) in tRNA + guanine. It participates in tRNA modification; tRNA-queuosine biosynthesis. Functionally, catalyzes the base-exchange of a guanine (G) residue with the queuine precursor 7-aminomethyl-7-deazaguanine (PreQ1) at position 34 (anticodon wobble position) in tRNAs with GU(N) anticodons (tRNA-Asp, -Asn, -His and -Tyr). Catalysis occurs through a double-displacement mechanism. The nucleophile active site attacks the C1' of nucleotide 34 to detach the guanine base from the RNA, forming a covalent enzyme-RNA intermediate. The proton acceptor active site deprotonates the incoming PreQ1, allowing a nucleophilic attack on the C1' of the ribose to form the product. After dissociation, two additional enzymatic reactions on the tRNA convert PreQ1 to queuine (Q), resulting in the hypermodified nucleoside queuosine (7-(((4,5-cis-dihydroxy-2-cyclopenten-1-yl)amino)methyl)-7-deazaguanosine). This Rickettsia africae (strain ESF-5) protein is Queuine tRNA-ribosyltransferase.